The following is a 105-amino-acid chain: UPF0235 protein RPR_04990 (105 aa).

It belongs to the UPF0235 family.

The polypeptide is UPF0235 protein RPR_04990 (Rickettsia peacockii (strain Rustic)).